The chain runs to 429 residues: G2/mitotic-specific cyclin-B1 (429 aa).

The segment at 71–114 (TGKVSAKIPPPKPLEKVPPVSEPEVELAETHEPEPVMDEKLSPE) is disordered. Residue K73 is modified to N6-acetyllysine. Positions 98–112 (AETHEPEPVMDEKLS) are enriched in basic and acidic residues. A Phosphoserine; by CDK1 modification is found at S122. Phosphoserine is present on S124. A Phosphoserine; by PLK1 modification is found at S129. S143 carries the phosphoserine modification. 2 interaction with CDK2 regions span residues 165-173 (EYVKDIYAY) and 254-257 (YEEM). T317 carries the post-translational modification Phosphothreonine.

It belongs to the cyclin family. Cyclin AB subfamily. Interacts with the CDC2 protein kinase to form a serine/threonine kinase holoenzyme complex also known as maturation promoting factor (MPF). The cyclin subunit imparts substrate specificity to the complex. Binds HEI10. Interacts with catalytically active RALBP1 and CDC2 during mitosis to form an endocytotic complex during interphase. Interacts with CCNF; interaction is required for nuclear localization. Interacts with CDK5RAP3. Interacts with RFPL4A and UBE2A. Interacts with INCA1. In terms of processing, ubiquitinated by the SCF(NIPA) complex during interphase, leading to its destruction. Not ubiquitinated during G2/M phases. Post-translationally, phosphorylated by PLK1 at Ser-129 on centrosomes during prophase: phosphorylation by PLK1 does not cause nuclear import. Phosphorylation at Ser-143 was also reported to be mediated by PLK1 but Ser-129 seems to be the primary phosphorylation site.

The protein localises to the cytoplasm. The protein resides in the nucleus. It is found in the cytoskeleton. Its subcellular location is the microtubule organizing center. It localises to the centrosome. In terms of biological role, essential for the control of the cell cycle at the G2/M (mitosis) transition. This is G2/mitotic-specific cyclin-B1 (CCNB1) from Mesocricetus auratus (Golden hamster).